Reading from the N-terminus, the 431-residue chain is Adenylosuccinate synthetase (431 aa).

GTP is bound by residues 13–19 and 41–43; these read GDEGKGK and GHT. The Proton acceptor role is filled by Asp-14. Mg(2+)-binding residues include Asp-14 and Gly-41. IMP is bound by residues 14 to 17, 39 to 42, Thr-130, Arg-144, Gln-225, Thr-240, and Arg-304; these read DEGK and NAGH. His-42 (proton donor) is an active-site residue. Position 300 to 306 (300 to 306) interacts with substrate; that stretch reads AVTGRPR. GTP contacts are provided by residues Arg-306, 332–334, and 415–417; these read KLD and STG.

This sequence belongs to the adenylosuccinate synthetase family. As to quaternary structure, homodimer. Requires Mg(2+) as cofactor.

The protein resides in the cytoplasm. The catalysed reaction is IMP + L-aspartate + GTP = N(6)-(1,2-dicarboxyethyl)-AMP + GDP + phosphate + 2 H(+). The protein operates within purine metabolism; AMP biosynthesis via de novo pathway; AMP from IMP: step 1/2. Functionally, plays an important role in the de novo pathway of purine nucleotide biosynthesis. Catalyzes the first committed step in the biosynthesis of AMP from IMP. This chain is Adenylosuccinate synthetase, found in Legionella pneumophila (strain Paris).